We begin with the raw amino-acid sequence, 464 residues long: Phospho-2-dehydro-3-deoxyheptonate aldolase AroG (464 aa).

Cys87 provides a ligand contact to Mn(2+). Phosphoenolpyruvate is bound by residues Arg126, 285–286, Lys308, and Arg339; that span reads ER. Residues His371, Glu413, and Asp443 each coordinate Mn(2+).

The protein belongs to the class-II DAHP synthase family. In terms of assembly, homodimer. Probably interacts with MSMEG_5536. Mn(2+) is required as a cofactor. The cofactor is Co(2+). It depends on Cd(2+) as a cofactor.

It carries out the reaction D-erythrose 4-phosphate + phosphoenolpyruvate + H2O = 7-phospho-2-dehydro-3-deoxy-D-arabino-heptonate + phosphate. It functions in the pathway metabolic intermediate biosynthesis; chorismate biosynthesis; chorismate from D-erythrose 4-phosphate and phosphoenolpyruvate: step 1/7. Functionally, catalyzes an aldol-like condensation reaction between phosphoenolpyruvate (PEP) and D-erythrose 4-phosphate (E4P) to generate 3-deoxy-D-arabino-heptulosonate 7-phosphate (DAH7P) and inorganic phosphate. The protein is Phospho-2-dehydro-3-deoxyheptonate aldolase AroG (aroG) of Mycolicibacterium smegmatis (strain ATCC 700084 / mc(2)155) (Mycobacterium smegmatis).